The chain runs to 439 residues: Acyl-lipid (8-3)-desaturase (439 aa).

The Cytochrome b5 heme-binding domain occupies 7–88 (GRSAAREMTA…LPKLDASKVE (82 aa)). The heme site is built by His-40 and His-66. Residues 123-143 (IPHMIYRVVEIVALFALSFWL) traverse the membrane as a helical segment. Positions 171-175 (HEMGH) match the Histidine box-1 motif. The Histidine box-2 motif lies at 208–213 (HSKHHA). 3 helical membrane-spanning segments follow: residues 254–274 (AYLF…LYLH), 287–307 (FVWI…LGYS), and 312–332 (VGMY…QFAV). The Histidine box-3 signature appears at 376-380 (QIEHH).

This sequence belongs to the fatty acid desaturase type 1 family. The cofactor is Fe(2+).

The protein localises to the membrane. It carries out the reaction an (8Z,11Z,14Z)-icosatrienoyl-containing glycerolipid + 2 Fe(II)-[cytochrome b5] + O2 + 2 H(+) = (5Z,8Z,11Z,14Z)-eicosatetraenoyl-containing glycerolipid + 2 Fe(III)-[cytochrome b5] + 2 H2O. The enzyme catalyses an (8Z,11Z,14Z,17Z)-eicosatetraenoyl-containing glycerolipid + 2 Fe(II)-[cytochrome b5] + O2 + 2 H(+) = a (5Z,8Z,11Z,14Z,17Z)-eicosapentaenoyl-containing glycerolipid + 2 Fe(III)-[cytochrome b5] + 2 H2O. In terms of biological role, fatty acid desaturase that introduces a cis double bond at the 5-position in 20-carbon polyunsaturated fatty acids incorporated in a glycerolipid that contain a Delta(8) double bond. This is Acyl-lipid (8-3)-desaturase from Thraustochytrium sp.